Here is a 158-residue protein sequence, read N- to C-terminus: Endoribonuclease YbeY (158 aa).

Residues His118, His122, and His128 each contribute to the Zn(2+) site.

It belongs to the endoribonuclease YbeY family. Zn(2+) is required as a cofactor.

The protein localises to the cytoplasm. Its function is as follows. Single strand-specific metallo-endoribonuclease involved in late-stage 70S ribosome quality control and in maturation of the 3' terminus of the 16S rRNA. This Alteromonas mediterranea (strain DSM 17117 / CIP 110805 / LMG 28347 / Deep ecotype) protein is Endoribonuclease YbeY.